Reading from the N-terminus, the 226-residue chain is ATP synthase F(0) complex subunit a (226 aa).

The next 6 helical transmembrane spans lie at Ala11–Phe31, Trp68–Leu88, Gln97–Phe117, Ile138–Val158, Ile164–Ile184, and Ala189–Ile209.

Belongs to the ATPase A chain family. In terms of assembly, component of the ATP synthase complex composed at least of ATP5F1A/subunit alpha, ATP5F1B/subunit beta, ATP5MC1/subunit c (homooctomer), MT-ATP6/subunit a, MT-ATP8/subunit 8, ATP5ME/subunit e, ATP5MF/subunit f, ATP5MG/subunit g, ATP5MK/subunit k, ATP5MJ/subunit j, ATP5F1C/subunit gamma, ATP5F1D/subunit delta, ATP5F1E/subunit epsilon, ATP5PF/subunit F6, ATP5PB/subunit b, ATP5PD/subunit d, ATP5PO/subunit OSCP. ATP synthase complex consists of a soluble F(1) head domain (subunits alpha(3) and beta(3)) - the catalytic core - and a membrane F(0) domain - the membrane proton channel (subunits c, a, 8, e, f, g, k and j). These two domains are linked by a central stalk (subunits gamma, delta, and epsilon) rotating inside the F1 region and a stationary peripheral stalk (subunits F6, b, d, and OSCP). Interacts with DNAJC30; interaction is direct.

The protein localises to the mitochondrion inner membrane. The catalysed reaction is H(+)(in) = H(+)(out). Functionally, subunit a, of the mitochondrial membrane ATP synthase complex (F(1)F(0) ATP synthase or Complex V) that produces ATP from ADP in the presence of a proton gradient across the membrane which is generated by electron transport complexes of the respiratory chain. ATP synthase complex consist of a soluble F(1) head domain - the catalytic core - and a membrane F(1) domain - the membrane proton channel. These two domains are linked by a central stalk rotating inside the F(1) region and a stationary peripheral stalk. During catalysis, ATP synthesis in the catalytic domain of F(1) is coupled via a rotary mechanism of the central stalk subunits to proton translocation. With the subunit c (ATP5MC1), forms the proton-conducting channel in the F(0) domain, that contains two crucial half-channels (inlet and outlet) that facilitate proton movement from the mitochondrial intermembrane space (IMS) into the matrix. Protons are taken up via the inlet half-channel and released through the outlet half-channel, following a Grotthuss mechanism. The sequence is that of ATP synthase F(0) complex subunit a from Canis lupus familiaris (Dog).